Reading from the N-terminus, the 864-residue chain is Paramyosin (864 aa).

The tract at residues 1–30 (MSSLYRDLDSDVSSTRIVRHSYNVYRGSSP) is nonhelical region. Positions 31–853 (SSQNRLESRI…QTVRRSRSMS (823 aa)) form a coiled coil. The interval 854 to 864 (VSREVTRVVRV) is nonhelical region.

It belongs to the paramyosin family. Homodimer. In terms of processing, phosphorylated. In terms of tissue distribution, most abundantly expressed in muscle tissues from byssus retractor and adductor muscles. Low expression in foot, gill, inner mantle and outer mantle.

It localises to the cytoplasm. Its subcellular location is the myofibril. Its function is as follows. Paramyosin is a major structural component of many thick filaments isolated from invertebrate muscles. In Mytilus galloprovincialis (Mediterranean mussel), this protein is Paramyosin.